The chain runs to 128 residues: Cytochrome c-type biogenesis protein CcmE (128 aa).

Residues 1–8 (MQKRVRNR) lie on the Cytoplasmic side of the membrane. Residues 9 to 29 (LITIIICFCSACLGISIILYN) traverse the membrane as a helical; Signal-anchor for type II membrane protein segment. Topologically, residues 30–128 (LEKNIVFFLP…KHDENYRPPQ (99 aa)) are periplasmic. Residues His-120 and Tyr-124 each contribute to the heme site.

The protein belongs to the CcmE/CycJ family.

It is found in the cell inner membrane. Heme chaperone required for the biogenesis of c-type cytochromes. Transiently binds heme delivered by CcmC and transfers the heme to apo-cytochromes in a process facilitated by CcmF and CcmH. In Rickettsia peacockii (strain Rustic), this protein is Cytochrome c-type biogenesis protein CcmE.